Here is a 490-residue protein sequence, read N- to C-terminus: Ribulose bisphosphate carboxylase large chain (490 aa).

Substrate contacts are provided by N127 and T177. Catalysis depends on K179, which acts as the Proton acceptor. K181 serves as a coordination point for substrate. 3 residues coordinate Mg(2+): K205, D207, and E208. K205 carries the N6-carboxylysine modification. Catalysis depends on H297, which acts as the Proton acceptor. The substrate site is built by R298, H330, and S382.

Belongs to the RuBisCO large chain family. Type I subfamily. As to quaternary structure, heterohexadecamer of 8 large chains and 8 small chains. Requires Mg(2+) as cofactor.

It localises to the plastid. Its subcellular location is the chloroplast. It carries out the reaction 2 (2R)-3-phosphoglycerate + 2 H(+) = D-ribulose 1,5-bisphosphate + CO2 + H2O. It catalyses the reaction D-ribulose 1,5-bisphosphate + O2 = 2-phosphoglycolate + (2R)-3-phosphoglycerate + 2 H(+). RuBisCO catalyzes two reactions: the carboxylation of D-ribulose 1,5-bisphosphate, the primary event in carbon dioxide fixation, as well as the oxidative fragmentation of the pentose substrate in the photorespiration process. Both reactions occur simultaneously and in competition at the same active site. This is Ribulose bisphosphate carboxylase large chain from Trieres chinensis (Marine centric diatom).